Reading from the N-terminus, the 156-residue chain is tRNA (cytidine(34)-2'-O)-methyltransferase (156 aa).

Gly-102, Leu-124, and Ser-132 together coordinate S-adenosyl-L-methionine.

This sequence belongs to the class IV-like SAM-binding methyltransferase superfamily. RNA methyltransferase TrmH family. TrmL subfamily. As to quaternary structure, homodimer.

The protein localises to the cytoplasm. It carries out the reaction cytidine(34) in tRNA + S-adenosyl-L-methionine = 2'-O-methylcytidine(34) in tRNA + S-adenosyl-L-homocysteine + H(+). The enzyme catalyses 5-carboxymethylaminomethyluridine(34) in tRNA(Leu) + S-adenosyl-L-methionine = 5-carboxymethylaminomethyl-2'-O-methyluridine(34) in tRNA(Leu) + S-adenosyl-L-homocysteine + H(+). Functionally, methylates the ribose at the nucleotide 34 wobble position in the two leucyl isoacceptors tRNA(Leu)(CmAA) and tRNA(Leu)(cmnm5UmAA). Catalyzes the methyl transfer from S-adenosyl-L-methionine to the 2'-OH of the wobble nucleotide. In Burkholderia pseudomallei (strain 1106a), this protein is tRNA (cytidine(34)-2'-O)-methyltransferase.